Here is a 540-residue protein sequence, read N- to C-terminus: Lysosomal cobalamin transport escort protein LMBD1 (540 aa).

At 1–10 (MATSGAASAE) the chain is on the extracellular side. Residues 11–31 (LVIGWCIFGLLLLAILAFCWI) form a helical membrane-spanning segment. Topologically, residues 32 to 50 (YVRKYQSRRESEVVSTITA) are cytoplasmic. Residues 51-71 (IFSLAIALITSALLPVDIFLV) traverse the membrane as a helical segment. At 72 to 100 (SYMKNQNGTFKDWANANVSRQIEDTVLYG) the chain is on the extracellular side. Residues Asn-78 and Asn-88 are each glycosylated (N-linked (GlcNAc...) asparagine). Residues 101-121 (YYTLYSVILFCVFFWIPFVYF) traverse the membrane as a helical segment. Residues 122-144 (YYEEKDDDDTSKCTQIKTALKYT) are Cytoplasmic-facing. Residues 145-165 (LGFVVICALLLLVGAFVPLNV) form a helical membrane-spanning segment. Topologically, residues 166–188 (PNNKNSTEWEKVKSLFEELGSSH) are extracellular. A glycan (N-linked (GlcNAc...) asparagine) is linked at Asn-170. The chain crosses the membrane as a helical span at residues 189-209 (GLAALSFSISSLTLIGMLAAI). Residues 210–305 (TYTAYGMSAL…KFCGALRPLK (96 aa)) lie on the Cytoplasmic side of the membrane. The YERL motif; mediates interaction with adapter protein complex 2 and is essential for its function in clathrin-mediated endocytosis of INSR signature appears at 232–235 (YERL). The residue at position 238 (Thr-238) is a Phosphothreonine. A WTKF motif; mediates interaction with adapter protein complex 2 and is essential for its function in clathrin-mediated endocytosis of INSR motif is present at residues 294–297 (WTKF). The helical transmembrane segment at 306–326 (IVWGIFFILVALLFVISLFLS) threads the bilayer. The Extracellular portion of the chain corresponds to 327–364 (NLDKALHSAGIDSGFIIFGANLSNPLNMLLPLLQTVFP). Asn-347 carries an N-linked (GlcNAc...) asparagine glycan. A helical membrane pass occupies residues 365–385 (LDYILITIIIMYFIFTSMAGI). Over 386–408 (RNIGIWFFWIRLYKIRRGRTRPQ) the chain is Cytoplasmic. A helical membrane pass occupies residues 409–429 (ALLFLCMILLLIVLHTSYMIY). Residues 430-486 (SLAPQYVMYGSQNYLIETNITSDNHKGNSTLSVPKRCDADAPEDQCTVTRTYLFLHK) are Extracellular-facing. N-linked (GlcNAc...) asparagine glycans are attached at residues Asn-448 and Asn-457. Residues 487-507 (FWFFSAAYYFGNWAFLGVFLI) traverse the membrane as a helical segment. Topologically, residues 508 to 540 (GLIVSCCKGKKSVIEGVDEDSDISDDEPSVYSA) are cytoplasmic. 2 positions are modified to phosphoserine: Ser-528 and Ser-531.

This sequence belongs to the LIMR family. LMBRD1 subfamily. As to quaternary structure, (Microbial infection) Interacts with hepatitis delta virus NES (HDAg-L). In terms of assembly, interacts with ABCD4; this interaction induces the translocation of ABCD4 from the endoplasmic reticulum to the lysosome. Interacts with ABCD4 and MMACHC; this interaction ensures the transport of cobalamin from the lysosome to the cytoplasm. Interacts with INSR, adapter protein complex 2 and clathrin heavy chain. N-glycosylated. Isoform 3 is expressed in liver.

The protein resides in the endoplasmic reticulum membrane. It localises to the lysosome membrane. The protein localises to the cell membrane. It is found in the cytoplasmic vesicle. Its subcellular location is the clathrin-coated vesicle. Lysosomal membrane chaperone required to export cobalamin (vitamin B12) from the lysosome to the cytosol, allowing its conversion to cofactors. Targets ABCD4 transporter from the endoplasmic reticulum to the lysosome. Then forms a complex with lysosomal ABCD4 and cytoplasmic MMACHC to transport cobalamin across the lysosomal membrane. Acts as an adapter protein which plays an important role in mediating and regulating the internalization of the insulin receptor (INSR). Involved in clathrin-mediated endocytosis of INSR via its interaction with adapter protein complex 2. Essential for the initiation of gastrulation and early formation of mesoderm structures during embryogenesis. Functionally, (Microbial infection) May play a role in the assembly of hepatitis delta virus (HDV). This chain is Lysosomal cobalamin transport escort protein LMBD1, found in Homo sapiens (Human).